Reading from the N-terminus, the 233-residue chain is UPF0758 protein TTE0897 (233 aa).

One can recognise an MPN domain in the interval 108-230; the sequence is SVTSPEDVIN…GISLKEKGYY (123 aa). Zn(2+) contacts are provided by histidine 179, histidine 181, and aspartate 192. The short motif at 179 to 192 is the JAMM motif element; that stretch reads HNHPSGDPTPSRED.

The protein belongs to the UPF0758 family.

In Caldanaerobacter subterraneus subsp. tengcongensis (strain DSM 15242 / JCM 11007 / NBRC 100824 / MB4) (Thermoanaerobacter tengcongensis), this protein is UPF0758 protein TTE0897.